A 424-amino-acid polypeptide reads, in one-letter code: GTPase Obg (424 aa).

Positions 2–158 (AKFIDQVKIM…YEANIVLKIL (157 aa)) constitute an Obg domain. In terms of domain architecture, OBG-type G spans 159–326 (SDVGLVGLPS…LKKIIWEFLE (168 aa)). GTP is bound by residues 165 to 172 (GLPSCGKS), 190 to 194 (FTTLV), 211 to 214 (DLPG), 280 to 283 (NKSD), and 307 to 309 (SAL). Mg(2+)-binding residues include Ser-172 and Thr-192. Residues 344-422 (KEINYEPDFV…IYQHKFEWEE (79 aa)) enclose the OCT domain.

This sequence belongs to the TRAFAC class OBG-HflX-like GTPase superfamily. OBG GTPase family. Monomer. It depends on Mg(2+) as a cofactor.

It localises to the cytoplasm. Its function is as follows. An essential GTPase which binds GTP, GDP and possibly (p)ppGpp with moderate affinity, with high nucleotide exchange rates and a fairly low GTP hydrolysis rate. Plays a role in control of the cell cycle, stress response, ribosome biogenesis and in those bacteria that undergo differentiation, in morphogenesis control. In Mycoplasmopsis synoviae (strain 53) (Mycoplasma synoviae), this protein is GTPase Obg.